We begin with the raw amino-acid sequence, 289 residues long: Serine/threonine-protein phosphatase Pgam5, mitochondrial (289 aa).

Residues 7–23 form a helical membrane-spanning segment; that stretch reads FACGTGAGLAAYYLQKL.

This sequence belongs to the phosphoglycerate mutase family. BPG-dependent PGAM subfamily. As to quaternary structure, interacts with Pk92B/ASK1.

It is found in the mitochondrion outer membrane. The catalysed reaction is O-phospho-L-seryl-[protein] + H2O = L-seryl-[protein] + phosphate. It catalyses the reaction O-phospho-L-threonyl-[protein] + H2O = L-threonyl-[protein] + phosphate. Its function is as follows. Displays phosphatase activity for serine/threonine residues, and dephosphorylates and activates Pk92B kinase. Has apparently no phosphoglycerate mutase activity. This Drosophila virilis (Fruit fly) protein is Serine/threonine-protein phosphatase Pgam5, mitochondrial.